The chain runs to 488 residues: MNVFFMFSLLFLAALGSCADDRNPLEECFRETDYEEFLEIARXXXXTSNPKHVVRVGAGMSGLSAAYVLAGAGHQVTVLEASERPGGRXXXXXXXXEGWYANLGPMRXXXXXXXXXXXXXKFGLNLNEFSQENDNAWYFIKXXXXXXXXXXDPGLLKYPVKPSEAGKSAGQLYEESLGKXXXXXXXXXXXXXXXXXXXXXXXXXXXXXXXXXXXXXXXXXXXXXXXXXXXXXXXXXXXXXXXXXXXXXFDEIVDGMDKLPTSMYQAIXXXXXXXXXXXXXXXXXXKVTVTYQTPAKXXXXXXXXXXXXXXXXXXXXXXXXXXXXXXXXXXXXXXXXXXXXXXIFLTCTKKFWEDDGIHGGKSTTDLPSRXXXXXXXXXXXXXXVIIAYGIGDDANFFQALDFKDCADIVFNDLSLIHQLPKEEIPSFCYPSMIQKXXXXXXXXXXITTFFTPYQFQHFSEAXXXXXXXIYFAGEYTAQAHGWIDSTIK.

Residues Met-60 to Ser-61, Glu-80 to Ala-81, Arg-88, and Gly-104 to Arg-107 contribute to the FAD site. Substrate-binding residues include Arg-107 and Tyr-388. A disulfide bridge links Cys-347 with Cys-428. Residues Glu-474 and Gly-481–Thr-486 contribute to the FAD site. Substrate is bound at residue Gly-481–Trp-482.

This sequence belongs to the flavin monoamine oxidase family. FIG1 subfamily. Monomer. This is in contrast with most of its orthologs, that are non-covalently linked homodimers. FAD serves as cofactor. N-glycosylated. As to expression, expressed by the venom gland.

The protein resides in the secreted. The enzyme catalyses an L-alpha-amino acid + O2 + H2O = a 2-oxocarboxylate + H2O2 + NH4(+). It catalyses the reaction L-leucine + O2 + H2O = 4-methyl-2-oxopentanoate + H2O2 + NH4(+). Functionally, catalyzes an oxidative deamination of predominantly hydrophobic and aromatic L-amino acids, thus producing hydrogen peroxide that may contribute to the diverse toxic effects of this enzyme. Shows activity on L-Leu. Exhibits diverse biological activities, such as hemorrhage, hemolysis, edema, antibacterial and antiparasitic activities, as well as regulation of platelet aggregation. When tested on SW480 and SW620 human colon cancer cells, shows inhibition of cell proliferation, and induction of apoptosis, which is probably a consequence of the increased caspase-3 activity and the decreased Bcl-2 expression. The chain is L-amino oxidase from Trimeresurus purpureomaculatus (Mangrove pit viper).